Reading from the N-terminus, the 427-residue chain is Mucorpepsin (427 aa).

The first 22 residues, 1-22, serve as a signal peptide directing secretion; the sequence is MLFSKISSAILLTAASFALTSA. Residues 23–66 constitute a propeptide, activation peptide; that stretch reads RPVSKQSDADDKLLALPLTSVNRKYSQTKHGQQAAEKLGGIKAF. The 333-residue stretch at 86–418 folds into the Peptidase A1 domain; the sequence is YAIPVSIGTP…DFGKNRIGFA (333 aa). Asp-104 is a catalytic residue. Cys-117 and Cys-123 form a disulfide bridge. Asn-254 carries N-linked (GlcNAc...) asparagine glycosylation. Residue Asp-303 is part of the active site. An intrachain disulfide couples Cys-338 to Cys-382.

This sequence belongs to the peptidase A1 family.

It catalyses the reaction Hydrolysis of proteins, favoring hydrophobic residues at P1 and P1'. Clots milk. Does not accept Lys at P1, and hence does not activate trypsinogen.. Functionally, this enzyme, capable of clotting milk is frequently used for cheese production. This chain is Mucorpepsin, found in Rhizomucor pusillus.